A 366-amino-acid polypeptide reads, in one-letter code: Peptide chain release factor 2 (366 aa).

Position 251 is an N5-methylglutamine (glutamine 251).

The protein belongs to the prokaryotic/mitochondrial release factor family. Post-translationally, methylated by PrmC. Methylation increases the termination efficiency of RF2.

The protein resides in the cytoplasm. In terms of biological role, peptide chain release factor 2 directs the termination of translation in response to the peptide chain termination codons UGA and UAA. The protein is Peptide chain release factor 2 of Campylobacter concisus (strain 13826).